We begin with the raw amino-acid sequence, 276 residues long: MSIDSLPPLREVIERHDLMPKKSLGQNFLFDLNLTSKIARQAGDLRDQPVIEVGPGPGGLTRALLAQGAYVTAIERDDRCLEALAEIAAHYPGRLRIIAGDALEQDFTALFPEGPKPRIVANLPYNVGTQLLLNWLLVEPWPPFYSSMTLMFQREVAERIVAKPDSDHYGRLGVLAGWRTQAKIAFDVPPQAFTPPPKVMSSVVHIVPRETPLPCRAEALGQITQAAFGQRRKMLRQSLKSIGGGALLEKTGIDGTRRAETLSVEEFVALANACLP.

The S-adenosyl-L-methionine site is built by Asn-27, Leu-29, Gly-54, Glu-75, Asp-101, and Asn-122.

It belongs to the class I-like SAM-binding methyltransferase superfamily. rRNA adenine N(6)-methyltransferase family. RsmA subfamily.

It is found in the cytoplasm. The catalysed reaction is adenosine(1518)/adenosine(1519) in 16S rRNA + 4 S-adenosyl-L-methionine = N(6)-dimethyladenosine(1518)/N(6)-dimethyladenosine(1519) in 16S rRNA + 4 S-adenosyl-L-homocysteine + 4 H(+). Its function is as follows. Specifically dimethylates two adjacent adenosines (A1518 and A1519) in the loop of a conserved hairpin near the 3'-end of 16S rRNA in the 30S particle. May play a critical role in biogenesis of 30S subunits. The polypeptide is Ribosomal RNA small subunit methyltransferase A (Brucella suis (strain ATCC 23445 / NCTC 10510)).